Here is a 440-residue protein sequence, read N- to C-terminus: MSLITDIYAREVLDSRGNPTVEVEVYTEDGGFGRGIVPSGASTGEHEAVELRDGDKNRFSGKGVEKAVANVNGPISKEIVGFEVTDQIAIDKAMIKLDGTPNKGKLGANAILGVSLAVARAAADELQVPLYNYIGGSNAHVLPTPMMNVINGGAHSENKVDFQEFMIMPVGAPSVKEAIRMGSETFHALKSLLSADGKATSVGDEGGFAPDFANNEEPLQYLIKAIEKAGYKPGKDVAIAVDVAASELWNDEDKKYKLRWSTGEEFTTEEFVKYLEGLVNKYPIISIEDPIDENNWDDWASITKELGKKVQLVGDDFFVTNTEYLAKGIKMGAANAILIKVNQIGTLTETMESIEMAKEAGYTAIVSHRSGETEDTTIADLVVATNAGQIKTGSMSRTDRIAKYNQLMRIEDQLEGVAEYKGINSFYNLSADAREEISNK.

Glutamine 163 contacts (2R)-2-phosphoglycerate. The Proton donor role is filled by glutamate 205. Positions 242, 288, and 315 each coordinate Mg(2+). Positions 340, 369, 370, and 391 each coordinate (2R)-2-phosphoglycerate. Residue lysine 340 is the Proton acceptor of the active site.

The protein belongs to the enolase family. Mg(2+) is required as a cofactor.

The protein localises to the cytoplasm. It localises to the secreted. Its subcellular location is the cell surface. It catalyses the reaction (2R)-2-phosphoglycerate = phosphoenolpyruvate + H2O. Its pathway is carbohydrate degradation; glycolysis; pyruvate from D-glyceraldehyde 3-phosphate: step 4/5. Its function is as follows. Catalyzes the reversible conversion of 2-phosphoglycerate (2-PG) into phosphoenolpyruvate (PEP). It is essential for the degradation of carbohydrates via glycolysis. This is Enolase from Pediococcus pentosaceus (strain ATCC 25745 / CCUG 21536 / LMG 10740 / 183-1w).